The following is a 612-amino-acid chain: Chaperone protein DnaK (612 aa).

T173 is subject to Phosphothreonine; by autocatalysis. The interval 576–612 is disordered; sequence AAKAQQAEGGANAEGKKADDNVVDAEYEEVKDDETKK. Low complexity predominate over residues 578 to 588; sequence KAQQAEGGANA. Residues 596 to 612 show a composition bias toward acidic residues; it reads NVVDAEYEEVKDDETKK.

This sequence belongs to the heat shock protein 70 family.

Acts as a chaperone. The sequence is that of Chaperone protein DnaK from Bacillus velezensis (strain DSM 23117 / BGSC 10A6 / LMG 26770 / FZB42) (Bacillus amyloliquefaciens subsp. plantarum).